The primary structure comprises 427 residues: Histidinol dehydrogenase (427 aa).

Y123, Q185, and N208 together coordinate NAD(+). Residues S231, Q253, and H256 each coordinate substrate. Zn(2+) is bound by residues Q253 and H256. Catalysis depends on proton acceptor residues E321 and H322. 4 residues coordinate substrate: H322, D355, E409, and H414. D355 is a binding site for Zn(2+). A Zn(2+)-binding site is contributed by H414.

Belongs to the histidinol dehydrogenase family. It depends on Zn(2+) as a cofactor.

The catalysed reaction is L-histidinol + 2 NAD(+) + H2O = L-histidine + 2 NADH + 3 H(+). Its pathway is amino-acid biosynthesis; L-histidine biosynthesis; L-histidine from 5-phospho-alpha-D-ribose 1-diphosphate: step 9/9. Catalyzes the sequential NAD-dependent oxidations of L-histidinol to L-histidinaldehyde and then to L-histidine. The polypeptide is Histidinol dehydrogenase (Oceanobacillus iheyensis (strain DSM 14371 / CIP 107618 / JCM 11309 / KCTC 3954 / HTE831)).